A 412-amino-acid polypeptide reads, in one-letter code: Protein ALF (412 aa).

Disordered regions lie at residues 1 to 47 (MDPE…PLPP) and 154 to 234 (GLSE…GISE). Pro residues predominate over residues 31 to 47 (PPQPPPPPLPPPQPLPP). A compositionally biased stretch (basic residues) spans 187 to 196 (MRQRRRKKVV). The span at 206 to 221 (MEEDEDTEEGQEDNED) shows a compositional bias: acidic residues. 3 consecutive DNA-binding regions follow at residues 237–241 (REHPF), 306–313 (NKPKMRHY), and 377–380 (YVPT).

This sequence belongs to the FLO/LFY family. In terms of tissue distribution, expressed in the floral meristem and also in the vegetative meristem.

Its subcellular location is the nucleus. Its function is as follows. Probable transcription factor required for the specification of floral meristem identity. In Petunia hybrida (Petunia), this protein is Protein ALF (ALF).